We begin with the raw amino-acid sequence, 161 residues long: Allophycocyanin beta chain (161 aa).

At N71 the chain carries N4-methylasparagine. A (2R,3E)-phycocyanobilin-binding site is contributed by C81.

The protein belongs to the phycobiliprotein family. Heterodimer of an alpha and a beta chain. In terms of processing, contains one covalently linked phycocyanobilin chromophore.

It is found in the cellular thylakoid membrane. Light-harvesting photosynthetic bile pigment-protein from the phycobiliprotein complex. Allophycocyanin has a maximum absorption at approximately 650 nanometers. This is Allophycocyanin beta chain (apcB) from Synechocystis sp. (strain ATCC 27184 / PCC 6803 / Kazusa).